The primary structure comprises 508 residues: Protein S-acyltransferase 18 (508 aa).

Transmembrane regions (helical) follow at residues 17 to 37 and 42 to 62; these read IVGA…LGFF and IAVI…IVLF. Residues 158-208 form the DHHC domain; that stretch reads SYCSLCDLEVKRSSKHCRTCNRCVEGFDHHCRWLNNCVGKKNYTTFILLMV. The active-site S-palmitoyl cysteine intermediate is Cys-188. The next 2 membrane-spanning stretches (helical) occupy residues 203-223 and 250-270; these read FILL…TALA and WALA…SAAM. Positions 443 to 468 are disordered; the sequence is VSPGRFSSPRRRFSGSSSSTVPSPKQ. The span at 456–466 shows a compositional bias: low complexity; sequence SGSSSSTVPSP.

Belongs to the DHHC palmitoyltransferase family.

Its subcellular location is the endoplasmic reticulum membrane. The protein localises to the cytoplasmic vesicle membrane. The catalysed reaction is L-cysteinyl-[protein] + hexadecanoyl-CoA = S-hexadecanoyl-L-cysteinyl-[protein] + CoA. S-acyltransferase involved in protein lipid modification. The chain is Protein S-acyltransferase 18 (PAT18) from Arabidopsis thaliana (Mouse-ear cress).